A 110-amino-acid chain; its full sequence is Large ribosomal subunit protein uL22 (110 aa).

It belongs to the universal ribosomal protein uL22 family. As to quaternary structure, part of the 50S ribosomal subunit.

In terms of biological role, this protein binds specifically to 23S rRNA; its binding is stimulated by other ribosomal proteins, e.g. L4, L17, and L20. It is important during the early stages of 50S assembly. It makes multiple contacts with different domains of the 23S rRNA in the assembled 50S subunit and ribosome. The globular domain of the protein is located near the polypeptide exit tunnel on the outside of the subunit, while an extended beta-hairpin is found that lines the wall of the exit tunnel in the center of the 70S ribosome. The protein is Large ribosomal subunit protein uL22 of Nitrosococcus oceani (strain ATCC 19707 / BCRC 17464 / JCM 30415 / NCIMB 11848 / C-107).